The primary structure comprises 341 residues: Holliday junction branch migration complex subunit RuvB (341 aa).

The large ATPase domain (RuvB-L) stretch occupies residues 1 to 182 (MTSSDPTLRP…FGIPTRLQFY (182 aa)). ATP-binding positions include Leu-21, Arg-22, Gly-63, Lys-66, Thr-67, Thr-68, 129–131 (EDF), Arg-172, Tyr-182, and Arg-219. Thr-67 contributes to the Mg(2+) binding site. The small ATPAse domain (RuvB-S) stretch occupies residues 183-253 (TEDELDLIVA…IADRALTRLG (71 aa)). The head domain (RuvB-H) stretch occupies residues 256-341 (HLGLDLGDRR…KGPGQSDLFG (86 aa)). 3 residues coordinate DNA: Arg-292, Arg-311, and Arg-316.

Belongs to the RuvB family. In terms of assembly, homohexamer. Forms an RuvA(8)-RuvB(12)-Holliday junction (HJ) complex. HJ DNA is sandwiched between 2 RuvA tetramers; dsDNA enters through RuvA and exits via RuvB. An RuvB hexamer assembles on each DNA strand where it exits the tetramer. Each RuvB hexamer is contacted by two RuvA subunits (via domain III) on 2 adjacent RuvB subunits; this complex drives branch migration. In the full resolvosome a probable DNA-RuvA(4)-RuvB(12)-RuvC(2) complex forms which resolves the HJ.

It localises to the cytoplasm. The enzyme catalyses ATP + H2O = ADP + phosphate + H(+). In terms of biological role, the RuvA-RuvB-RuvC complex processes Holliday junction (HJ) DNA during genetic recombination and DNA repair, while the RuvA-RuvB complex plays an important role in the rescue of blocked DNA replication forks via replication fork reversal (RFR). RuvA specifically binds to HJ cruciform DNA, conferring on it an open structure. The RuvB hexamer acts as an ATP-dependent pump, pulling dsDNA into and through the RuvAB complex. RuvB forms 2 homohexamers on either side of HJ DNA bound by 1 or 2 RuvA tetramers; 4 subunits per hexamer contact DNA at a time. Coordinated motions by a converter formed by DNA-disengaged RuvB subunits stimulates ATP hydrolysis and nucleotide exchange. Immobilization of the converter enables RuvB to convert the ATP-contained energy into a lever motion, pulling 2 nucleotides of DNA out of the RuvA tetramer per ATP hydrolyzed, thus driving DNA branch migration. The RuvB motors rotate together with the DNA substrate, which together with the progressing nucleotide cycle form the mechanistic basis for DNA recombination by continuous HJ branch migration. Branch migration allows RuvC to scan DNA until it finds its consensus sequence, where it cleaves and resolves cruciform DNA. This Cereibacter sphaeroides (strain ATCC 17029 / ATH 2.4.9) (Rhodobacter sphaeroides) protein is Holliday junction branch migration complex subunit RuvB.